Here is a 344-residue protein sequence, read N- to C-terminus: S-adenosylmethionine:tRNA ribosyltransferase-isomerase (344 aa).

Belongs to the QueA family. In terms of assembly, monomer.

It is found in the cytoplasm. The enzyme catalyses 7-aminomethyl-7-carbaguanosine(34) in tRNA + S-adenosyl-L-methionine = epoxyqueuosine(34) in tRNA + adenine + L-methionine + 2 H(+). It functions in the pathway tRNA modification; tRNA-queuosine biosynthesis. In terms of biological role, transfers and isomerizes the ribose moiety from AdoMet to the 7-aminomethyl group of 7-deazaguanine (preQ1-tRNA) to give epoxyqueuosine (oQ-tRNA). This is S-adenosylmethionine:tRNA ribosyltransferase-isomerase from Nitrosococcus oceani (strain ATCC 19707 / BCRC 17464 / JCM 30415 / NCIMB 11848 / C-107).